The following is a 348-amino-acid chain: GDSL esterase/lipase At4g30140 (348 aa).

The first 28 residues, 1–28 (MVEGESKALWIILATVFAVAAVAPAVHG), serve as a signal peptide directing secretion. The Nucleophile role is filled by Ser-40. Residues Asp-316 and His-319 contribute to the active site. Asn-342 carries an N-linked (GlcNAc...) asparagine glycan.

It belongs to the 'GDSL' lipolytic enzyme family.

It is found in the secreted. This is GDSL esterase/lipase At4g30140 from Arabidopsis thaliana (Mouse-ear cress).